The following is a 167-amino-acid chain: Histidinol dehydrogenase (167 aa).

2 residues coordinate Zn(2+): glutamine 109 and histidine 112.

Belongs to the histidinol dehydrogenase family. In terms of assembly, homodimer. Zn(2+) is required as a cofactor.

The enzyme catalyses L-histidinol + 2 NAD(+) + H2O = L-histidine + 2 NADH + 3 H(+). Its pathway is amino-acid biosynthesis; L-histidine biosynthesis; L-histidine from 5-phospho-alpha-D-ribose 1-diphosphate: step 9/9. Catalyzes the sequential NAD-dependent oxidations of L-histidinol to L-histidinaldehyde and then to L-histidine. The sequence is that of Histidinol dehydrogenase (hisD) from Salmonella enteritidis.